The chain runs to 285 residues: Inositol oxygenase (285 aa).

Arg-29 provides a ligand contact to substrate. At Ser-33 the chain carries Phosphoserine. 85–87 (DES) is a substrate binding site. Residues His-98, His-123, and Asp-124 each contribute to the Fe cation site. Substrate contacts are provided by residues Lys-127 and 141–142 (GD). Residues His-194, His-220, and Asp-253 each contribute to the Fe cation site. 220 to 221 (HS) provides a ligand contact to substrate.

The protein belongs to the myo-inositol oxygenase family. The cofactor is Fe cation.

It localises to the cytoplasm. It carries out the reaction myo-inositol + O2 = D-glucuronate + H2O + H(+). The protein operates within polyol metabolism; myo-inositol degradation into D-glucuronate; D-glucuronate from myo-inositol: step 1/1. In Pongo abelii (Sumatran orangutan), this protein is Inositol oxygenase (MIOX).